The following is a 344-amino-acid chain: Ketol-acid reductoisomerase (NADP(+)) (344 aa).

A KARI N-terminal Rossmann domain is found at 2-181; it reads EKIYYDADIS…GAGRAGILTT (180 aa). Residues 25 to 28, Arg48, Ser52, and 82 to 85 each bind NADP(+); these read YGSQ and DERQ. The active site involves His107. Gly133 serves as a coordination point for NADP(+). A KARI C-terminal knotted domain is found at 182-327; that stretch reads TFREETETDL…RKLRSMMPFI (146 aa). Residues Asp190, Glu194, Glu226, and Glu230 each contribute to the Mg(2+) site. Position 251 (Ser251) interacts with substrate.

It belongs to the ketol-acid reductoisomerase family. Requires Mg(2+) as cofactor.

It carries out the reaction (2R)-2,3-dihydroxy-3-methylbutanoate + NADP(+) = (2S)-2-acetolactate + NADPH + H(+). The enzyme catalyses (2R,3R)-2,3-dihydroxy-3-methylpentanoate + NADP(+) = (S)-2-ethyl-2-hydroxy-3-oxobutanoate + NADPH + H(+). It participates in amino-acid biosynthesis; L-isoleucine biosynthesis; L-isoleucine from 2-oxobutanoate: step 2/4. Its pathway is amino-acid biosynthesis; L-valine biosynthesis; L-valine from pyruvate: step 2/4. In terms of biological role, involved in the biosynthesis of branched-chain amino acids (BCAA). Catalyzes an alkyl-migration followed by a ketol-acid reduction of (S)-2-acetolactate (S2AL) to yield (R)-2,3-dihydroxy-isovalerate. In the isomerase reaction, S2AL is rearranged via a Mg-dependent methyl migration to produce 3-hydroxy-3-methyl-2-ketobutyrate (HMKB). In the reductase reaction, this 2-ketoacid undergoes a metal-dependent reduction by NADPH to yield (R)-2,3-dihydroxy-isovalerate. This chain is Ketol-acid reductoisomerase (NADP(+)), found in Alicyclobacillus acidocaldarius subsp. acidocaldarius (strain ATCC 27009 / DSM 446 / BCRC 14685 / JCM 5260 / KCTC 1825 / NBRC 15652 / NCIMB 11725 / NRRL B-14509 / 104-IA) (Bacillus acidocaldarius).